Reading from the N-terminus, the 1048-residue chain is Probable inactive receptor kinase At5g10020 (1048 aa).

An N-terminal signal peptide occupies residues 1-21 (MSHFLTFCFLSLLLLLHGANA). LRR repeat units lie at residues 100–120 (RLRN…PSLG), 124–146 (SLQH…ISEL), 148–169 (SLNH…GFRN), 172–194 (QLRS…FTEL), 196–217 (NVEF…PMEN), 224–246 (TLRH…ESIG), 250–272 (NLEI…GSQP), 273–294 (SLRI…ELLQ), 298–319 (PLLE…INSS), 320–342 (TLTM…FKSC), 365–387 (TPDV…TSAF), 389–411 (RLSV…WGDS), 412–433 (QFSV…SFFT), 436–457 (SLRS…RGSR), 469–491 (QMEL…IGTM), 493–516 (KIKV…NKLS), 517–539 (GLLF…LPSQ), and 540–560 (MVGF…DLRS). Residues 602-622 (IAIIVASVGAAIMILFVLFAY) form a helical membrane-spanning segment. The disordered stretch occupies residues 696-733 (EQGAPATSAPTNLLDDYPAASGRKSSSGGSPLSSSPRF). Residues 716–733 (SGRKSSSGGSPLSSSPRF) show a composition bias toward low complexity. Ser-744 is modified (phosphoserine). Residues 768–1045 (RAPAEVLGRS…IRQVLDHLTS (278 aa)) form the Protein kinase domain. Residues 774-782 (LGRSSHGTL) and Lys-796 each bind ATP.

Belongs to the protein kinase superfamily.

Its subcellular location is the membrane. This chain is Probable inactive receptor kinase At5g10020, found in Arabidopsis thaliana (Mouse-ear cress).